Here is a 630-residue protein sequence, read N- to C-terminus: ATP-dependent RNA helicase mrh4, mitochondrial (630 aa).

The N-terminal 46 residues, 1-46, are a transit peptide targeting the mitochondrion; it reads MNRLGGLSLPLRPVCLFCRAQTSLALSPLQGGQAVRSIATGRLRRR. The interval 46 to 108 is disordered; sequence RARMTLSKDV…GETEEKPAMN (63 aa). The short motif at 167-174 is the Q motif element; that stretch reads DAVPTPIQ. In terms of domain architecture, Helicase ATP-binding spans 195 to 407; that stretch reads DDDEPQYEQY…RKLYPDIWRL (213 aa). Position 208 to 215 (208 to 215) interacts with ATP; that stretch reads AETGSGKT. Positions 235-255 are enriched in basic and acidic residues; the sequence is EMEKKEEERKVREREENKKNQ. The segment at 235-265 is disordered; that stretch reads EMEKKEEERKVREREENKKNQAFDLEPEIPP. The short motif at 354–357 is the DEAD box element; sequence DEAD. Residues 452–630 form the Helicase C-terminal domain; the sequence is GSDEAGSPWS…VREVWFGLDS (179 aa).

It belongs to the DEAD box helicase family. MRH4 subfamily.

It is found in the mitochondrion. It carries out the reaction ATP + H2O = ADP + phosphate + H(+). In terms of biological role, ATP-binding RNA helicase involved in mitochondrial RNA metabolism. Required for maintenance of mitochondrial DNA. In Emericella nidulans (strain FGSC A4 / ATCC 38163 / CBS 112.46 / NRRL 194 / M139) (Aspergillus nidulans), this protein is ATP-dependent RNA helicase mrh4, mitochondrial (mrh4).